Reading from the N-terminus, the 324-residue chain is Proto-oncogene Mas (324 aa).

Over 1–35 the chain is Extracellular; it reads MDQSNMTSLAEEKAMNTSSRNASLGSSHPPIPIVH. N-linked (GlcNAc...) asparagine glycosylation is found at asparagine 5, asparagine 16, and asparagine 21. The chain crosses the membrane as a helical span at residues 36-60; the sequence is WVIMSISPLGFVENGILLWFLCFRM. Topologically, residues 61–64 are cytoplasmic; it reads RRNP. The chain crosses the membrane as a helical span at residues 65–86; it reads FTVYITHLSIADISLLFCIFIL. Topologically, residues 87 to 103 are extracellular; it reads SIDYALDYELSSGHHYT. Residues 104 to 127 traverse the membrane as a helical segment; it reads IVTLSVTFLFGYNTGLYLLTAISV. The Cytoplasmic segment spans residues 128–148; it reads ERCLSVLYPIWYRCHRPKHQS. A helical membrane pass occupies residues 149–171; that stretch reads AFVCALLWALSCLVTTMEYVMCI. Residues 172–184 lie on the Extracellular side of the membrane; sequence DSGEESHSRSDCR. The chain crosses the membrane as a helical span at residues 185–205; the sequence is AVIIFIAILSFLVFTPLMLVS. Residues 206–223 are Cytoplasmic-facing; it reads STILVVKIRKNTWASHSS. A helical membrane pass occupies residues 224–244; sequence KLYIVIMVTIIIFLIFAMPMR. Over 245–262 the chain is Extracellular; the sequence is VLYLLYYEYWSAFGNLHN. Residues 263 to 283 traverse the membrane as a helical segment; the sequence is ISLLFSTINSSANPFIYFFVG. Over 284 to 324 the chain is Cytoplasmic; it reads SSKKKRFRESLKVVLTRAFKDEMQPRRQEGNGNTVSIETVV.

It belongs to the G-protein coupled receptor 1 family. In terms of assembly, interacts with AGTR1. Interacts with FLNA (via filamin repeat 21); increases PKA-mediated phosphorylation of FLNA.

It localises to the cell membrane. Functionally, acts specifically as a functional antagonist of AGTR1 (angiotensin-2 type 1 receptor), although it up-regulates AGTR1 receptor levels. Positive regulation of AGTR1 levels occurs through activation of the G-proteins GNA11 and GNAQ, and stimulation of the protein kinase C signaling cascade. The antagonist effect on AGTR1 function is probably due to AGTR1 being physically altered by MAS1. Receptor for angiotensin 1-7. The polypeptide is Proto-oncogene Mas (Mas1) (Mus musculus (Mouse)).